A 476-amino-acid chain; its full sequence is Glycogen synthase (476 aa).

An ADP-alpha-D-glucose-binding site is contributed by Lys15.

It belongs to the glycosyltransferase 1 family. Bacterial/plant glycogen synthase subfamily.

The enzyme catalyses [(1-&gt;4)-alpha-D-glucosyl](n) + ADP-alpha-D-glucose = [(1-&gt;4)-alpha-D-glucosyl](n+1) + ADP + H(+). It functions in the pathway glycan biosynthesis; glycogen biosynthesis. Functionally, synthesizes alpha-1,4-glucan chains using ADP-glucose. The polypeptide is Glycogen synthase (Streptococcus gordonii (strain Challis / ATCC 35105 / BCRC 15272 / CH1 / DL1 / V288)).